We begin with the raw amino-acid sequence, 948 residues long: FRIGIDA-like protein 5 (948 aa).

Positions aspartate 47 to alanine 164 form a coiled coil. Disordered stretches follow at residues glutamate 447–glutamine 500, valine 518–glutamate 538, and arginine 804–histidine 894. Composition is skewed to basic and acidic residues over residues serine 459 to alanine 475 and valine 518 to proline 527. The segment covering serine 807–serine 817 has biased composition (low complexity). The segment covering lysine 818–lysine 830 has biased composition (polar residues). Basic residues predominate over residues phenylalanine 861 to serine 872. The span at methionine 873–histidine 894 shows a compositional bias: polar residues.

It belongs to the Frigida family. In terms of tissue distribution, expressed at low levels during seed development.

This Arabidopsis thaliana (Mouse-ear cress) protein is FRIGIDA-like protein 5 (FRL5).